Reading from the N-terminus, the 170-residue chain is Translocator protein 2 (170 aa).

The next 5 membrane-spanning stretches (helical) occupy residues 3–23 (LQGA…WLFT), 45–65 (VLLL…YLVW), 78–98 (LPLG…VLFF), 104–124 (GLAL…ALIW), and 130–150 (LAAL…ALTY).

Belongs to the TspO/BZRP family. Homotetramer. May also form homodimer. Expressed in erythrocytes (at protein level).

It is found in the endoplasmic reticulum membrane. The protein localises to the cell membrane. In terms of biological role, cholesterol-binding protein involved in the redistribution of cholesterol from lipid droplets to the endoplasmic reticulum. Required to meet cholesterol demands during erythropoietic differentiation. May play a role in transport processes at the plasma membrane of erythrocytes, including regulating VDAC-mediated ATP export, and import of the heme precursors protoporphyrin IX and 5-aminolevulinic acid. This is Translocator protein 2 (TSPO2) from Homo sapiens (Human).